Reading from the N-terminus, the 193-residue chain is dTTP/UTP pyrophosphatase (193 aa).

Asp-77 acts as the Proton acceptor in catalysis.

It belongs to the Maf family. YhdE subfamily. A divalent metal cation serves as cofactor.

The protein resides in the cytoplasm. It carries out the reaction dTTP + H2O = dTMP + diphosphate + H(+). The catalysed reaction is UTP + H2O = UMP + diphosphate + H(+). Its function is as follows. Nucleoside triphosphate pyrophosphatase that hydrolyzes dTTP and UTP. May have a dual role in cell division arrest and in preventing the incorporation of modified nucleotides into cellular nucleic acids. The chain is dTTP/UTP pyrophosphatase from Bacteroides thetaiotaomicron (strain ATCC 29148 / DSM 2079 / JCM 5827 / CCUG 10774 / NCTC 10582 / VPI-5482 / E50).